We begin with the raw amino-acid sequence, 467 residues long: Acid phosphatase PHO12 (467 aa).

Positions 1–17 (MLKSAVYSILAASLVNA) are cleaved as a signal peptide. Catalysis depends on His75, which acts as the Nucleophile. Residues Asn97, Asn162, Asn192, Asn250, and Asn315 are each glycosylated (N-linked (GlcNAc...) asparagine). The active-site Proton donor is the Asp338. Residues Asn356, Asn390, Asn439, Asn445, and Asn461 are each glycosylated (N-linked (GlcNAc...) asparagine).

It belongs to the histidine acid phosphatase family. Post-translationally, glycosylated during secretion across the membrane.

The catalysed reaction is a phosphate monoester + H2O = an alcohol + phosphate. The chain is Acid phosphatase PHO12 (PHO12) from Saccharomyces cerevisiae (strain ATCC 204508 / S288c) (Baker's yeast).